A 239-amino-acid chain; its full sequence is Uridylate kinase (239 aa).

10–13 provides a ligand contact to ATP; that stretch reads KLSG. Gly52 contacts UMP. ATP contacts are provided by Gly53 and Arg57. UMP is bound by residues Asp72 and 133–140; that span reads TGNPFFTT. Residues Thr160, Tyr166, and Asp169 each contribute to the ATP site.

This sequence belongs to the UMP kinase family. Homohexamer.

The protein localises to the cytoplasm. It catalyses the reaction UMP + ATP = UDP + ADP. It participates in pyrimidine metabolism; CTP biosynthesis via de novo pathway; UDP from UMP (UMPK route): step 1/1. Its activity is regulated as follows. Inhibited by UTP. In terms of biological role, catalyzes the reversible phosphorylation of UMP to UDP. The chain is Uridylate kinase from Porphyromonas gingivalis (strain ATCC BAA-308 / W83).